The chain runs to 368 residues: Epoxyqueuosine reductase QueH (368 aa).

Positions 6, 7, 87, and 90 each coordinate [4Fe-4S] cluster. An intrachain disulfide couples cysteine 174 to cysteine 176.

Belongs to the QueH family.

The enzyme catalyses epoxyqueuosine(34) in tRNA + AH2 = queuosine(34) in tRNA + A + H2O. It participates in tRNA modification; tRNA-queuosine biosynthesis. Its function is as follows. Catalyzes the conversion of epoxyqueuosine (oQ) to queuosine (Q), which is a hypermodified base found in the wobble positions of tRNA(Asp), tRNA(Asn), tRNA(His) and tRNA(Tyr). The protein is Epoxyqueuosine reductase QueH of Helicobacter pylori (strain ATCC 700392 / 26695) (Campylobacter pylori).